Reading from the N-terminus, the 156-residue chain is Glutaredoxin-2, mitochondrial (156 aa).

The transit peptide at 1–19 directs the protein to the mitochondrion; it reads MSWRRAASVGRRLVASGRI. Residues 50-150 form the Glutaredoxin domain; sequence VNQIQETISN…PLVHQCYLKK (101 aa). Cys-61 is a [2Fe-2S] cluster binding site. Residue Lys-67 participates in glutathione binding. At Cys-70 the chain carries S-glutathionyl cysteine; alternate. Cys-70 and Cys-73 are joined by a disulfide. Glutathione is bound by residues Gln-102 and Val-114. Residue Cys-146 coordinates [2Fe-2S] cluster.

This sequence belongs to the glutaredoxin family. As to quaternary structure, monomer; active form. Homodimer; inactive form. The homodimer is probably linked by 1 2Fe-2S cluster. In terms of tissue distribution, widely expressed. Highly expressed in testis, and at much lower level in kidney and brain.

Its subcellular location is the mitochondrion. It localises to the nucleus. With respect to regulation, the 2Fe-2S present in the homodimer leads to inactivation of the enzyme. The 2Fe-2S may serve as a redox sensor: the presence of one-electron oxidants or reductants leading to the loss of the 2Fe-2S cluster, subsequent monomerization and activation of the enzyme. Its function is as follows. Glutathione-dependent oxidoreductase that facilitates the maintenance of mitochondrial redox homeostasis upon induction of apoptosis by oxidative stress. Involved in response to hydrogen peroxide and regulation of apoptosis caused by oxidative stress. Acts as a very efficient catalyst of monothiol reactions because of its high affinity for protein glutathione-mixed disulfides. Can receive electrons not only from glutathione (GSH), but also from thioredoxin reductase supporting both monothiol and dithiol reactions. Efficiently catalyzes both glutathionylation and deglutathionylation of mitochondrial complex I, which in turn regulates the superoxide production by the complex. Overexpression decreases the susceptibility to apoptosis and prevents loss of cardiolipin and cytochrome c release. The polypeptide is Glutaredoxin-2, mitochondrial (Glrx2) (Mus musculus (Mouse)).